Here is a 679-residue protein sequence, read N- to C-terminus: Glutamine-dependent NAD(+) synthetase (679 aa).

Residues 12–276 enclose the CN hydrolase domain; it reads VRVAACTHHT…VRRSVADVDT (265 aa). Glu52 functions as the Proton acceptor; for glutaminase activity in the catalytic mechanism. The active-site For glutaminase activity is Lys121. Tyr127 contacts L-glutamine. The active-site Nucleophile; for glutaminase activity is Cys176. L-glutamine is bound by residues Ser203 and Arg209. The segment at 337-679 is ligase; it reads QQDCYEAYNI…DQIDREVPKG (343 aa). 366–373 contacts ATP; it reads GVSGGLDS. Asn456 contacts deamido-NAD(+). Thr480 serves as a coordination point for ATP. Residues Glu485, 490-493, and Lys635 contribute to the deamido-NAD(+) site; that span reads WSTY. Positions 639–658 are disordered; that stretch reads LPNGPKVSHGGALSPRGDWR.

This sequence in the C-terminal section; belongs to the NAD synthetase family.

The enzyme catalyses deamido-NAD(+) + L-glutamine + ATP + H2O = L-glutamate + AMP + diphosphate + NAD(+) + H(+). The protein operates within cofactor biosynthesis; NAD(+) biosynthesis; NAD(+) from deamido-NAD(+) (L-Gln route): step 1/1. Its function is as follows. Catalyzes the ATP-dependent amidation of deamido-NAD to form NAD. Uses L-glutamine as a nitrogen source. In Mycobacterium bovis (strain ATCC BAA-935 / AF2122/97), this protein is Glutamine-dependent NAD(+) synthetase.